The chain runs to 418 residues: D-amino acid dehydrogenase (418 aa).

3–17 is a binding site for FAD; sequence VLVLGAGVAGVSSAW.

Belongs to the DadA oxidoreductase family. FAD serves as cofactor.

The enzyme catalyses a D-alpha-amino acid + A + H2O = a 2-oxocarboxylate + AH2 + NH4(+). It participates in amino-acid degradation; D-alanine degradation; NH(3) and pyruvate from D-alanine: step 1/1. Functionally, oxidative deamination of D-amino acids. This chain is D-amino acid dehydrogenase, found in Neisseria meningitidis serogroup C (strain 053442).